Consider the following 185-residue polypeptide: Adenine phosphoribosyltransferase (185 aa).

Belongs to the purine/pyrimidine phosphoribosyltransferase family. As to quaternary structure, homodimer.

It is found in the cytoplasm. It carries out the reaction AMP + diphosphate = 5-phospho-alpha-D-ribose 1-diphosphate + adenine. It functions in the pathway purine metabolism; AMP biosynthesis via salvage pathway; AMP from adenine: step 1/1. Functionally, catalyzes a salvage reaction resulting in the formation of AMP, that is energically less costly than de novo synthesis. This chain is Adenine phosphoribosyltransferase, found in Aliarcobacter butzleri (strain RM4018) (Arcobacter butzleri).